A 117-amino-acid chain; its full sequence is Ubiquitin-like protein 3 (117 aa).

Positions I10–L88 constitute a Ubiquitin-like domain. C113 carries the S-palmitoyl cysteine lipid modification. C114 bears the Cysteine methyl ester mark. A lipid anchor (S-geranylgeranyl cysteine) is attached at C114. Residues V115–L117 constitute a propeptide, removed in mature form.

The protein resides in the cell membrane. This chain is Ubiquitin-like protein 3 (Ubl3), found in Mus musculus (Mouse).